The chain runs to 473 residues: Lactate utilization protein B (473 aa).

4Fe-4S ferredoxin-type domains lie at 302–332 (GSEF…GHSY) and 351–380 (YDDY…LHDL). [4Fe-4S] cluster contacts are provided by Cys-311, Cys-314, Cys-317, Cys-321, Cys-364, Cys-367, and Cys-371.

Belongs to the LutB/YkgF family.

Is involved in L-lactate degradation and allows cells to grow with lactate as the sole carbon source. Has probably a role as an electron transporter during oxidation of L-lactate. This Bacillus cereus (strain G9842) protein is Lactate utilization protein B.